We begin with the raw amino-acid sequence, 479 residues long: MSTKGKHPRADQGTDPFEEKLQRLKEAFNTGKTKTAKFRAEQLQSLGRFLQDNSKQLHDALDGDLGKSGFESDMSEIILCENEVDLALKNLQTWMKDEPVSTNLLTKLSTAFIRKEPFGLVLIIAPWNYPVNLMIIPLVGAIAAGNCVVLKPSEISKNTEKVLAELLPQYLDQSCFAVMLGGPEETGQLLEHKFDYIFFTGSPRVGKIVMTAAAKHLTPITLELGGKNPCYVDDNCDPQTVANRVAWFRYFNAGQTCVAPDYILCSQEMQEQLVPALQNAITRFYGDNPQTSPNLGRIINQKHFKRLQGLLGCGRVAIGGQSDEGERYIAPTVLVDVQETEPVMQEEIFGPILPLVTVRSLDEAIEFMNQREKPLALYAYSNNAEVIKQVLARTSSGGFCGNDGFMYMTLSSLPFGGVGSSGMGRYHGKFSFDTFSNQRACLLSCPGMEKLNGLRYPPYSPRRQQLLRWAIGSESCTLL.

Catalysis depends on residues glutamate 223 and cysteine 257. The S-geranylgeranyl cysteine moiety is linked to residue cysteine 476. Positions 477–479 (TLL) are cleaved as a propeptide — removed in mature form.

This sequence belongs to the aldehyde dehydrogenase family. Geranylgeranylation is important for membrane localization and enzyme activity. As to expression, expressed in testis, kidney, small intestine, spleen, white adipose tissue, liver and lung.

It is found in the cell membrane. It carries out the reaction an aldehyde + NAD(+) + H2O = a carboxylate + NADH + 2 H(+). The catalysed reaction is hexadecanoate + NADH + 2 H(+) = hexadecanal + NAD(+) + H2O. It catalyses the reaction octanal + NAD(+) + H2O = octanoate + NADH + 2 H(+). In terms of biological role, oxidizes medium and long chain aldehydes into non-toxic fatty acids. In Mus musculus (Mouse), this protein is Aldehyde dehydrogenase family 3 member B3.